The primary structure comprises 667 residues: MSNRRETRAQAQQFIDNLKPLQHPNSEKVYLEGSRPDLKVGMRQIHQSDTLVAGDEANPVFEANPPLKVYDCAGAYSDPDANIDVRKGLEKFRENWIEERGDTVQLTSASSGFTQQRLADDGLDHLRFESLLPPRRAKEGKRVTQLHYARQGIITPEMEYIAIRENMAKSEVTDPILTQKDKGESFGAVIGEPITAEFVRQEIARGRAIIPLNINHPEAEPMIIGRNFLVKVNANIGNSAVTSSIEEEVEKLVWSTRWGADTVMDLSTGRYIHETREWIIRNSPVPIGTVPIYQALEKVNGVAEDLNWETFRDTLIEQAEQGVDYFTIHAGVLLRYVPMTAKRLTGIVSRGGSIMAKWCLSHHKENFLYEHFREICEICAAYDVSLSLGDGMRPGSIADANDEAQFSELETLGKLVKVAWEYDVQTIIEGPGHIPMNLIKENMDKQLEVCDEAPFYTLGPQTTDIAPGYDHFTSGIGAAMIAWYGCAMLCYVTPKEHLGLPNKDDVKQGLIAYKIAAHAGDVAKGHPSAQIRDNALSKARFEFRWEDQYNLGLDPETARAYHDESLPQESAKVAHFCSMCGPKFCSMKITQEVRDYAAAQEREAEARVIDIKSATEYDSYTGSESDTAKRASQREQGMAQMSAEFKAKGAELYHEASHKQPDVALED.

Substrate-binding positions include Asn235, Met264, Tyr293, His329, 349 to 351 (SRG), 390 to 393 (DGMR), and Glu429. His433 is a Zn(2+) binding site. Residue Tyr456 coordinates substrate. Position 497 (His497) interacts with Zn(2+). 3 residues coordinate [4Fe-4S] cluster: Cys577, Cys580, and Cys585. Residues 618 to 642 (DSYTGSESDTAKRASQREQGMAQMS) are disordered.

It belongs to the ThiC family. As to quaternary structure, homodimer. The cofactor is [4Fe-4S] cluster.

It carries out the reaction 5-amino-1-(5-phospho-beta-D-ribosyl)imidazole + S-adenosyl-L-methionine = 4-amino-2-methyl-5-(phosphooxymethyl)pyrimidine + CO + 5'-deoxyadenosine + formate + L-methionine + 3 H(+). It functions in the pathway cofactor biosynthesis; thiamine diphosphate biosynthesis. Functionally, catalyzes the synthesis of the hydroxymethylpyrimidine phosphate (HMP-P) moiety of thiamine from aminoimidazole ribotide (AIR) in a radical S-adenosyl-L-methionine (SAM)-dependent reaction. The sequence is that of Phosphomethylpyrimidine synthase from Shewanella pealeana (strain ATCC 700345 / ANG-SQ1).